The primary structure comprises 213 residues: Thymidylate kinase (213 aa).

11–18 (GPEGAGKT) contacts ATP.

The protein belongs to the thymidylate kinase family.

The enzyme catalyses dTMP + ATP = dTDP + ADP. Functionally, phosphorylation of dTMP to form dTDP in both de novo and salvage pathways of dTTP synthesis. This Leuconostoc mesenteroides subsp. mesenteroides (strain ATCC 8293 / DSM 20343 / BCRC 11652 / CCM 1803 / JCM 6124 / NCDO 523 / NBRC 100496 / NCIMB 8023 / NCTC 12954 / NRRL B-1118 / 37Y) protein is Thymidylate kinase.